Consider the following 255-residue polypeptide: U2 small nuclear ribonucleoprotein A' (255 aa).

4 LRR repeats span residues 20 to 41, 43 to 64, 65 to 86, and 89 to 110; these read RDRE…GATL, QFDA…PLLR, RLKT…LDQA, and CLTE…DPLA. In terms of domain architecture, LRRCT spans 123-161; sequence NPVTNKKHYRLYVIYKVPQVRVLDFQKVKLKERQEAEKM. An N6-acetyllysine; alternate modification is found at Lys172. A Glycyl lysine isopeptide (Lys-Gly) (interchain with G-Cter in SUMO2); alternate cross-link involves residue Lys172. The tract at residues 174–201 is disordered; that stretch reads IARRSKTFNPGAGLPTDKKKGGPSPGDV. Phosphoserine occurs at positions 178 and 197. A Glycyl lysine isopeptide (Lys-Gly) (interchain with G-Cter in SUMO2) cross-link involves residue Lys221. A disordered region spans residues 222–255; that stretch reads GLLQSGQIPGRERRSGPTDDGEEEMEEDTVTNGS. A phosphoserine mark is found at Ser236 and Ser255. Residues 240 to 255 show a composition bias toward acidic residues; the sequence is DDGEEEMEEDTVTNGS.

This sequence belongs to the U2 small nuclear ribonucleoprotein A family. Identified in the spliceosome B complex. Identified in the spliceosome C complex. Found in a pre-mRNA splicing complex with SFRS4, SFRS5, SNRNP70, SNRPA1, SRRM1 and SRRM2. Found in a pre-mRNA exonic splicing enhancer (ESE) complex with SNRNP70, SNRPA1, SRRM1 and TRA2B. Contributes to the binding of stem loop IV of U2 snRNA with SNRPB2.

The protein localises to the nucleus. Involved in pre-mRNA splicing as component of the spliceosome. Associated with sn-RNP U2, where it contributes to the binding of stem loop IV of U2 snRNA. In Homo sapiens (Human), this protein is U2 small nuclear ribonucleoprotein A' (SNRPA1).